The chain runs to 534 residues: Probable alpha-galactosidase A (534 aa).

An N-terminal signal peptide occupies residues 1-25 (MRLITRWIPLANALASTMPVQVVAS). C47 and C79 are disulfide-bonded. Residues N50, N88, N94, and N124 are each glycosylated (N-linked (GlcNAc...) asparagine). C127 and C157 are oxidised to a cystine. D155 functions as the Nucleophile in the catalytic mechanism. N-linked (GlcNAc...) asparagine glycosylation occurs at N204. D213 (proton donor) is an active-site residue. Residues 413 to 534 (CSQVIPTGLI…GLPAGVHVAL (122 aa)) enclose the Ricin B-type lectin domain. C430 and C443 form a disulfide bridge. An N-linked (GlcNAc...) asparagine glycan is attached at N444. A disulfide bridge connects residues C468 and C481.

It belongs to the glycosyl hydrolase 27 family.

It localises to the secreted. It catalyses the reaction Hydrolysis of terminal, non-reducing alpha-D-galactose residues in alpha-D-galactosides, including galactose oligosaccharides, galactomannans and galactolipids.. Functionally, hydrolyzes a variety of simple alpha-D-galactoside as well as more complex molecules such as oligosaccharides and polysaccharides. The polypeptide is Probable alpha-galactosidase A (aglA) (Aspergillus oryzae (strain ATCC 42149 / RIB 40) (Yellow koji mold)).